Consider the following 447-residue polypeptide: MTTILKHLPVGQRIGIAFSGGLDTSAALLWMRQKGAVPYAYTANLGQPDEEDYDAIPRRAMEYGAENARLIDCRKQLVAEGIAAIQCGAFHNTTGGLTYFNTTPLGRAVTGTMLVAAMKEDGVNIWGDGSTYKGNDIERFYRYGLLTNAELQIYKPWLDTDFIDELGGRHEMSEFMTACGFDYKMSVEKAYSTDSNMLGATHEAKDLEYLNSSVKIVNPIMGVKFWDESVKIPAEEVTVRFEQGHPVALNGKTFSDDVEMMLEANRIGGRHGLGMSDQIENRIIEAKSRGIYEAPGMALLHIAYERLLTGIHNEDTIEQYHAHGRQLGRLLYQGRWFDSQALMLRDSLQRWVASQITGEVTLELRRGNDYSILNTISNNLTYKPERLTMEKGDSVFSPDDRIGQLTMRNLDITDTREKLFGYAKTGLLSSSAASGVPQVENLENKAK.

Residues 17–25 and Ala43 contribute to the ATP site; that span reads AFSGGLDTS. L-citrulline is bound at residue Tyr99. 2 residues coordinate ATP: Gly129 and Thr131. Residues Thr131, Asn135, and Asp136 each coordinate L-aspartate. An L-citrulline-binding site is contributed by Asn135. Asp136 lines the ATP pocket. Arg139 and Ser192 together coordinate L-citrulline. Position 194 (Asp194) interacts with ATP. The L-citrulline site is built by Thr201, Glu203, and Glu280.

It belongs to the argininosuccinate synthase family. Type 2 subfamily. Homotetramer.

The protein localises to the cytoplasm. The enzyme catalyses L-citrulline + L-aspartate + ATP = 2-(N(omega)-L-arginino)succinate + AMP + diphosphate + H(+). It participates in amino-acid biosynthesis; L-arginine biosynthesis; L-arginine from L-ornithine and carbamoyl phosphate: step 2/3. The polypeptide is Argininosuccinate synthase (Escherichia fergusonii (strain ATCC 35469 / DSM 13698 / CCUG 18766 / IAM 14443 / JCM 21226 / LMG 7866 / NBRC 102419 / NCTC 12128 / CDC 0568-73)).